A 142-amino-acid polypeptide reads, in one-letter code: Semaphorin-like protein VACWR164 (142 aa).

The Sema domain maps to 1-142 (MNTIKQSFST…MPQMKKILKM (142 aa)).

It belongs to the semaphorin family.

This is Semaphorin-like protein VACWR164 from Bos taurus (Bovine).